Here is a 677-residue protein sequence, read N- to C-terminus: Methionine--tRNA ligase (677 aa).

Positions 15-25 (PYANGSIHLGH) match the 'HIGH' region motif. Residues Cys-146, Cys-149, Cys-159, and Cys-162 each coordinate Zn(2+). A 'KMSKS' region motif is present at residues 333-337 (KMSKS). Lys-336 provides a ligand contact to ATP. A tRNA-binding domain is found at 575–677 (DFAKVDLRVA…AGAKPGHQVK (103 aa)).

Belongs to the class-I aminoacyl-tRNA synthetase family. MetG type 1 subfamily. In terms of assembly, homodimer. Requires Zn(2+) as cofactor.

The protein resides in the cytoplasm. It carries out the reaction tRNA(Met) + L-methionine + ATP = L-methionyl-tRNA(Met) + AMP + diphosphate. Is required not only for elongation of protein synthesis but also for the initiation of all mRNA translation through initiator tRNA(fMet) aminoacylation. The polypeptide is Methionine--tRNA ligase (Escherichia coli O127:H6 (strain E2348/69 / EPEC)).